A 164-amino-acid chain; its full sequence is R-phycoerythrin alpha chain (164 aa).

(2R,3E)-phycoerythrobilin-binding residues include cysteine 82 and cysteine 139.

This sequence belongs to the phycobiliprotein family. As to quaternary structure, heterodimer of an alpha and a beta chain. In terms of processing, contains two covalently linked bilin chromophores.

The protein localises to the plastid. It localises to the chloroplast thylakoid membrane. Functionally, light-harvesting photosynthetic bile pigment-protein from the phycobiliprotein complex. The protein is R-phycoerythrin alpha chain (cpeA) of Pyropia haitanensis (Red seaweed).